The primary structure comprises 68 residues: MSQEAIIRSWKDPFSRENSTQNPAGNPFSELKEAQMDKLVGAGDMEAACTFTLPGGGGVCTLTSECIC.

The segment at 1-28 (MSQEAIIRSWKDPFSRENSTQNPAGNPF) is disordered. Residues 1–48 (MSQEAIIRSWKDPFSRENSTQNPAGNPFSELKEAQMDKLVGAGDMEAA) constitute a propeptide that is removed on maturation. A cross-link (beta-methyllanthionine (Cys-Thr)) is located at residues 49–50 (CT). 2 cross-links (beta-methyllanthionine (Thr-Cys)) span residues 52–60 (TLPGGGGVC) and 61–66 (TLTSEC). Positions 63–68 (TSECIC) form a cross-link, S-(2-aminovinyl)-3-methyl-D-cysteine (Thr-Cys). Serine 64 bears the 2,3-didehydroalanine (Ser) mark.

Belongs to the type B lantibiotic family. Post-translationally, maturation of lantibiotics involves the enzymatic conversion of Thr, and Ser into dehydrated AA and the formation of thioether bonds with cysteine. The carboxy-terminal beta-methyllanthionine undergoes decarboxylation. This is followed by membrane translocation and cleavage of the modified precursor.

Kills a number of Gram-positive bacteria. Acts at the level of cell wall biosynthesis by interfering with bacterial peptidoglycan biosynthesis. Specifically inhibits the conversion of the lipid II intermediate into polymeric nascent glycan strands by transglycosylation. May interact with the peptidoglycan precursor rather than with the enzyme. This is Lantibiotic mersacidin (mrsA) from Bacillus sp. (strain HIL-Y85/54728).